Reading from the N-terminus, the 179-residue chain is Large ribosomal subunit protein uL6 (179 aa).

The protein belongs to the universal ribosomal protein uL6 family. As to quaternary structure, part of the 50S ribosomal subunit.

In terms of biological role, this protein binds to the 23S rRNA, and is important in its secondary structure. It is located near the subunit interface in the base of the L7/L12 stalk, and near the tRNA binding site of the peptidyltransferase center. The sequence is that of Large ribosomal subunit protein uL6 from Prochlorococcus marinus (strain NATL2A).